The chain runs to 489 residues: mRNA cleavage and polyadenylation factor CLP1 (489 aa).

Residues Glu-28 and 152–157 (YSGKTT) contribute to the ATP site.

The protein belongs to the Clp1 family. Clp1 subfamily. In terms of assembly, component of a pre-mRNA cleavage factor complex. Interacts directly with PCF11.

Its subcellular location is the nucleus. Functionally, required for endonucleolytic cleavage during polyadenylation-dependent pre-mRNA 3'-end formation. The polypeptide is mRNA cleavage and polyadenylation factor CLP1 (Candida albicans (strain SC5314 / ATCC MYA-2876) (Yeast)).